Reading from the N-terminus, the 435-residue chain is Adenylosuccinate synthetase (435 aa).

GTP is bound by residues Gly13–Lys19 and Gly41–Thr43. Asp14 acts as the Proton acceptor in catalysis. Mg(2+)-binding residues include Asp14 and Gly41. IMP-binding positions include Asp14–Lys17, Asn39–His42, Thr131, Arg145, Gln226, Thr241, and Arg309. His42 serves as the catalytic Proton donor. Thr305–Arg311 serves as a coordination point for substrate. GTP contacts are provided by residues Arg311, Lys337–Asp339, and Ser419–Gly421.

This sequence belongs to the adenylosuccinate synthetase family. Homodimer. The cofactor is Mg(2+).

Its subcellular location is the cytoplasm. The catalysed reaction is IMP + L-aspartate + GTP = N(6)-(1,2-dicarboxyethyl)-AMP + GDP + phosphate + 2 H(+). It functions in the pathway purine metabolism; AMP biosynthesis via de novo pathway; AMP from IMP: step 1/2. Its function is as follows. Plays an important role in the de novo pathway of purine nucleotide biosynthesis. Catalyzes the first committed step in the biosynthesis of AMP from IMP. The chain is Adenylosuccinate synthetase from Dechloromonas aromatica (strain RCB).